A 195-amino-acid chain; its full sequence is Glycerol-3-phosphate acyltransferase (195 aa).

The next 6 membrane-spanning stretches (helical) occupy residues 4–24 (GLILALVFGYLLGSIPFGLLL), 53–73 (GLAAATLLLDALKGTAAVLIA), 80–100 (TAVWAGLGAFLGHLFPVWLGF), 110–130 (LGVLIGLAWQVALIFAVIWLA), 133–153 (FLFRYSSLAALTAAVIVPIAL), and 154–174 (YFLSAPQIAVLFVVMSIIVFI).

Belongs to the PlsY family. In terms of assembly, probably interacts with PlsX.

It is found in the cell inner membrane. The enzyme catalyses an acyl phosphate + sn-glycerol 3-phosphate = a 1-acyl-sn-glycero-3-phosphate + phosphate. It functions in the pathway lipid metabolism; phospholipid metabolism. Catalyzes the transfer of an acyl group from acyl-phosphate (acyl-PO(4)) to glycerol-3-phosphate (G3P) to form lysophosphatidic acid (LPA). This enzyme utilizes acyl-phosphate as fatty acyl donor, but not acyl-CoA or acyl-ACP. The chain is Glycerol-3-phosphate acyltransferase from Mesorhizobium japonicum (strain LMG 29417 / CECT 9101 / MAFF 303099) (Mesorhizobium loti (strain MAFF 303099)).